The following is a 265-amino-acid chain: Short chain dehydrogenase mdpC (265 aa).

3 residues coordinate NADP(+): Ile25, Asn98, and Arg131. Residues Ser147 and Ser148 each act as proton donor in the active site. Residues Tyr162, Lys166, and Thr197 each contribute to the NADP(+) site. The Proton acceptor role is filled by Tyr162. Lys166 (lowers pKa of active site Tyr) is an active-site residue.

Belongs to the short-chain dehydrogenases/reductases (SDR) family.

The enzyme catalyses 3,8,9,10-tetrahydroxy-6-methyl-1,4-dihydroanthracen-1-one + NADPH + H(+) = (3R)-3,8,9,10-tetrahydroxy-6-methyl-1,2,3,4-tetrahydroanthracen-1-one + NADP(+). It functions in the pathway secondary metabolite biosynthesis. Its function is as follows. Short chain dehydrogenase; part of the gene cluster that mediates the biosynthesis of monodictyphenone, a prenyl xanthone derivative. The pathway begins with the synthesis of atrochrysone thioester by the polyketide synthase (PKS) mdpG. The atrochrysone carboxyl ACP thioesterase mdpF then breaks the thioester bond and releases the atrochrysone carboxylic acid from mdpG. The atrochrysone carboxylic acid is then converted to atrochrysone which is further transformed into emodin anthrone. The next step is performed by the anthrone oxygenase mdpH that catalyzes the oxidation of emodinanthrone to emodin. Emodin is further modified to yield monodictyphenone via several steps involving mdpB, mdpC mdpJ, mdpK and mdpL. The short chain dehydrogenase mdpC converts the tautomers of emodin hydroquinone into the 3-hydroxy-3,4-dihydroan-thracen-1(2H)-one derivative. These enzymes with xptA, xptB and xptC are also proposed to be involved in the synthesis of shamixanthone from emodin. Especially, direct reduction of emodin by the short chain dehydrogenase mdpC followed by dehydration catalyzed by the scytalone dehydratase-like protein mdpB gives loss of oxygen and formation of chrysophanol intermediate in two simple steps. This Emericella nidulans (strain FGSC A4 / ATCC 38163 / CBS 112.46 / NRRL 194 / M139) (Aspergillus nidulans) protein is Short chain dehydrogenase mdpC.